The chain runs to 401 residues: Tryptophan synthase beta chain (401 aa).

Lysine 92 is modified (N6-(pyridoxal phosphate)lysine).

Belongs to the TrpB family. In terms of assembly, tetramer of two alpha and two beta chains. It depends on pyridoxal 5'-phosphate as a cofactor.

It carries out the reaction (1S,2R)-1-C-(indol-3-yl)glycerol 3-phosphate + L-serine = D-glyceraldehyde 3-phosphate + L-tryptophan + H2O. The protein operates within amino-acid biosynthesis; L-tryptophan biosynthesis; L-tryptophan from chorismate: step 5/5. The beta subunit is responsible for the synthesis of L-tryptophan from indole and L-serine. In Ruthia magnifica subsp. Calyptogena magnifica, this protein is Tryptophan synthase beta chain.